Reading from the N-terminus, the 444-residue chain is DNA primase DnaG (444 aa).

The region spanning 173 to 250 (DAILIVEGRS…YVTRAPRGLE (78 aa)) is the Toprim domain. Residues E179, D221, and D223 each coordinate Mg(2+). Positions 302-354 (VTSSVNKTDKYSQKNESKQFKQQKNENKQVKDNSKEKTQKSTEKHNETEETHL) are disordered. A compositionally biased stretch (basic and acidic residues) spans 308–354 (KTDKYSQKNESKQFKQQKNENKQVKDNSKEKTQKSTEKHNETEETHL).

It belongs to the archaeal DnaG primase family. In terms of assembly, forms a ternary complex with MCM helicase and DNA. Component of the archaeal exosome complex. It depends on Mg(2+) as a cofactor.

It carries out the reaction ssDNA + n NTP = ssDNA/pppN(pN)n-1 hybrid + (n-1) diphosphate.. RNA polymerase that catalyzes the synthesis of short RNA molecules used as primers for DNA polymerase during DNA replication. Also part of the exosome, which is a complex involved in RNA degradation. Acts as a poly(A)-binding protein that enhances the interaction between heteromeric, adenine-rich transcripts and the exosome. In Methanosphaera stadtmanae (strain ATCC 43021 / DSM 3091 / JCM 11832 / MCB-3), this protein is DNA primase DnaG.